A 481-amino-acid chain; its full sequence is Glutamate--tRNA ligase (481 aa).

Residues 10 to 20 (PSPTGHLHIGN) carry the 'HIGH' region motif. The 'KMSKS' region signature appears at 251-255 (KLSKR). ATP is bound at residue Lys254.

This sequence belongs to the class-I aminoacyl-tRNA synthetase family. Glutamate--tRNA ligase type 1 subfamily. In terms of assembly, monomer.

The protein localises to the cytoplasm. The catalysed reaction is tRNA(Glu) + L-glutamate + ATP = L-glutamyl-tRNA(Glu) + AMP + diphosphate. Functionally, catalyzes the attachment of glutamate to tRNA(Glu) in a two-step reaction: glutamate is first activated by ATP to form Glu-AMP and then transferred to the acceptor end of tRNA(Glu). The chain is Glutamate--tRNA ligase from Exiguobacterium sibiricum (strain DSM 17290 / CCUG 55495 / CIP 109462 / JCM 13490 / 255-15).